A 309-amino-acid polypeptide reads, in one-letter code: Carboxylesterase Culp6 homolog (309 aa).

The chain crosses the membrane as a helical span at residues Ile-5–Val-25. Cys-55 and Cys-146 are joined by a disulfide. Residues Ser-157, Asp-253, and His-279 contribute to the active site. Cys-249 and Cys-256 are oxidised to a cystine.

This sequence belongs to the cutinase family.

The protein localises to the cell membrane. It catalyses the reaction a butanoate ester + H2O = an aliphatic alcohol + butanoate + H(+). With respect to regulation, inhibited by tetrahydrolipstatin (THL), a specific lipase inhibitor. In terms of biological role, esterase that may be involved in cell wall biosynthesis and/or maintenance. Hydrolyzes pNP-butyrate (C4). The protein is Carboxylesterase Culp6 homolog of Corynebacterium glutamicum (strain ATCC 13032 / DSM 20300 / JCM 1318 / BCRC 11384 / CCUG 27702 / LMG 3730 / NBRC 12168 / NCIMB 10025 / NRRL B-2784 / 534).